Here is a 330-residue protein sequence, read N- to C-terminus: MPHSVALRGPSPWGFRLVGGKDFSTPLTISRINPGSKAALANLCPGDIILAINGESTEAMTHLEAQNKIKACVEQLLLSVSRAEERSWSPPILEDGKAQAYRINIEPEPQDNGPAVGKRPMPHAAGGSPVDSRPALSLQHPQPSRPHASSSADAALPLQLSGLHISPSQSTDPLKSLPRNRNGIDVESDVYKMLQDYERPASEPKQSGSFRYLQGMLEAGENGEKLDRLSNPRSIKPAGPKLGAAMSGLQMLPECTRCGNGIVGTIVKARDKLYHPECFMCDDCGLNLKQRGYFFIEEQLYCETHAKERVKPPEGYDVVAVYPNAKVELV.

The PDZ domain occupies 8-84 (RGPSPWGFRL…QLLLSVSRAE (77 aa)). Disordered stretches follow at residues 106–152 (EPEP…SSSA) and 163–182 (LHIS…RNRN). Positions 139–152 (QHPQPSRPHASSSA) are enriched in polar residues. The LIM zinc-binding domain maps to 255 to 305 (CTRCGNGIVGTIVKARDKLYHPECFMCDDCGLNLKQRGYFFIEEQLYCETH).

In terms of assembly, interacts (via LIM domain) with PTPN13. Interacts (via PDZ domain) with ACTN1.

It is found in the cytoplasm. Its subcellular location is the cytoskeleton. The protein resides in the cell projection. The protein localises to the dendritic spine. It localises to the early endosome membrane. It is found in the recycling endosome membrane. Its subcellular location is the nucleus. The protein resides in the perinuclear region. The protein localises to the lamellipodium. It localises to the synapse. It is found in the synaptosome. Suppresses SRC activation by recognizing and binding to active SRC and facilitating PTPN13-mediated dephosphorylation of SRC 'Tyr-419' leading to its inactivation. Inactivated SRC dissociates from this protein allowing the initiation of a new SRC inactivation cycle. Involved in reorganization of the actin cytoskeleton. In nonmuscle cells, binds to ACTN1 (alpha-actinin-1), increases the affinity of ACTN1 to F-actin (filamentous actin), and promotes formation of actin stress fibers. Involved in regulation of the synaptic AMPA receptor transport in dendritic spines of hippocampal pyramidal neurons directing the receptors toward an insertion at the postsynaptic membrane. Links endosomal surface-internalized GRIA1-containing AMPA receptors to the alpha-actinin/actin cytoskeleton. Increases AMPA receptor-mediated excitatory postsynaptic currents in neurons. The chain is PDZ and LIM domain protein 4 (PDLIM4) from Gallus gallus (Chicken).